A 297-amino-acid chain; its full sequence is MSHSDQSQRFLFDDTDVRGEMVDLERSYSEVLAKHPYPEPVAQLLGEMLAAASLLCGTLKFDGLLVLQARSSGAVPLLMVECSSDRQVRGLARYSAESIGADAGMQELMPEGVLTLTVDPVKGQRYQGIVALEGVNLAECLSNYFASSEQLPTRFWLNANGRRARGLLLQQLPADRLKDPEAREASWQHLTTLADTLTAEELLALDNETVLHRLYHEETVRLFEPQPLVFHCSCSRERSANALVSLGQADCERLLEEEEGSISIDCQFCNQRYLFDASDVAQLFAGAGSQGPSETRH.

2 disulfides stabilise this stretch: cysteine 232-cysteine 234 and cysteine 266-cysteine 269.

The protein belongs to the HSP33 family. Post-translationally, under oxidizing conditions two disulfide bonds are formed involving the reactive cysteines. Under reducing conditions zinc is bound to the reactive cysteines and the protein is inactive.

It is found in the cytoplasm. In terms of biological role, redox regulated molecular chaperone. Protects both thermally unfolding and oxidatively damaged proteins from irreversible aggregation. Plays an important role in the bacterial defense system toward oxidative stress. In Pseudomonas aeruginosa (strain LESB58), this protein is 33 kDa chaperonin.